A 143-amino-acid polypeptide reads, in one-letter code: Small ribosomal subunit protein uS12 (143 aa).

The segment covering 1–20 (MGKCRGLRTARKLRSHRRDH) has biased composition (basic residues). Residues 1-26 (MGKCRGLRTARKLRSHRRDHKWHDKQ) are disordered. Residue Lys-37 forms a Glycyl lysine isopeptide (Lys-Gly) (interchain with G-Cter in SUMO2) linkage. The residue at position 54 (Lys-54) is an N6-succinyllysine. The residue at position 62 (Pro-62) is a 3-hydroxyproline. An N6-acetyllysine modification is found at Lys-135.

The protein belongs to the universal ribosomal protein uS12 family. As to quaternary structure, component of the 40S small ribosomal subunit. Part of the small subunit (SSU) processome, composed of more than 70 proteins and the RNA chaperone small nucleolar RNA (snoRNA) U3. (Microbial infection) Interacts with the African swine fever virus (ASFV) ubiquitin-conjugating enzyme UBCv1; this interaction probably plays a role in the viral regulation of host protein synthesis. In terms of processing, hydroxylation at Pro-62 affects translation termination efficiency.

It localises to the cytoplasm. Its subcellular location is the cytosol. It is found in the rough endoplasmic reticulum. The protein resides in the nucleus. The protein localises to the nucleolus. In terms of biological role, component of the ribosome, a large ribonucleoprotein complex responsible for the synthesis of proteins in the cell. The small ribosomal subunit (SSU) binds messenger RNAs (mRNAs) and translates the encoded message by selecting cognate aminoacyl-transfer RNA (tRNA) molecules. The large subunit (LSU) contains the ribosomal catalytic site termed the peptidyl transferase center (PTC), which catalyzes the formation of peptide bonds, thereby polymerizing the amino acids delivered by tRNAs into a polypeptide chain. The nascent polypeptides leave the ribosome through a tunnel in the LSU and interact with protein factors that function in enzymatic processing, targeting, and the membrane insertion of nascent chains at the exit of the ribosomal tunnel. Plays an important role in translational accuracy. Part of the small subunit (SSU) processome, first precursor of the small eukaryotic ribosomal subunit. During the assembly of the SSU processome in the nucleolus, many ribosome biogenesis factors, an RNA chaperone and ribosomal proteins associate with the nascent pre-rRNA and work in concert to generate RNA folding, modifications, rearrangements and cleavage as well as targeted degradation of pre-ribosomal RNA by the RNA exosome. The polypeptide is Small ribosomal subunit protein uS12 (RPS23) (Sus scrofa (Pig)).